A 378-amino-acid chain; its full sequence is Uroporphyrinogen decarboxylase (378 aa).

Substrate contacts are provided by residues Arg40–Arg44, Asp90, Tyr167, Ser222, and His355.

This sequence belongs to the uroporphyrinogen decarboxylase family. In terms of assembly, homodimer.

The protein resides in the cytoplasm. It catalyses the reaction uroporphyrinogen III + 4 H(+) = coproporphyrinogen III + 4 CO2. Its pathway is porphyrin-containing compound metabolism; protoporphyrin-IX biosynthesis; coproporphyrinogen-III from 5-aminolevulinate: step 4/4. Functionally, catalyzes the decarboxylation of four acetate groups of uroporphyrinogen-III to yield coproporphyrinogen-III. This Psychrobacter cryohalolentis (strain ATCC BAA-1226 / DSM 17306 / VKM B-2378 / K5) protein is Uroporphyrinogen decarboxylase.